We begin with the raw amino-acid sequence, 377 residues long: Nitric oxide reductase FlRd-NAD(+) reductase (377 aa).

The protein belongs to the FAD-dependent oxidoreductase family. FAD serves as cofactor.

The protein resides in the cytoplasm. It catalyses the reaction 2 reduced [nitric oxide reductase rubredoxin domain] + NAD(+) + H(+) = 2 oxidized [nitric oxide reductase rubredoxin domain] + NADH. It participates in nitrogen metabolism; nitric oxide reduction. Its function is as follows. One of at least two accessory proteins for anaerobic nitric oxide (NO) reductase. Reduces the rubredoxin moiety of NO reductase. This chain is Nitric oxide reductase FlRd-NAD(+) reductase (norW), found in Shigella boydii serotype 4 (strain Sb227).